Consider the following 455-residue polypeptide: Probable carboxypeptidase MCYG_07204 (455 aa).

Residues 1–21 (MQKTYLLALLVSSLASVRSLA) form the signal peptide. N-linked (GlcNAc...) asparagine glycosylation occurs at N93. D170 serves as a coordination point for Zn(2+). The Proton acceptor role is filled by E202. E203 is a binding site for Zn(2+). The N-linked (GlcNAc...) asparagine glycan is linked to N390.

Belongs to the peptidase M20A family. Requires Zn(2+) as cofactor.

The protein localises to the secreted. This is Probable carboxypeptidase MCYG_07204 from Arthroderma otae (strain ATCC MYA-4605 / CBS 113480) (Microsporum canis).